A 148-amino-acid polypeptide reads, in one-letter code: Deoxyuridine 5'-triphosphate nucleotidohydrolase (148 aa).

Substrate contacts are provided by residues 67–69 (RSG), Asn-80, 84–86 (LID), and Met-94.

Belongs to the dUTPase family. The cofactor is Mg(2+).

It catalyses the reaction dUTP + H2O = dUMP + diphosphate + H(+). Its pathway is pyrimidine metabolism; dUMP biosynthesis; dUMP from dCTP (dUTP route): step 2/2. Its function is as follows. This enzyme is involved in nucleotide metabolism: it produces dUMP, the immediate precursor of thymidine nucleotides and it decreases the intracellular concentration of dUTP so that uracil cannot be incorporated into DNA. This chain is Deoxyuridine 5'-triphosphate nucleotidohydrolase, found in Paraburkholderia phytofirmans (strain DSM 17436 / LMG 22146 / PsJN) (Burkholderia phytofirmans).